The sequence spans 524 residues: Cytochrome P450 4F12 (524 aa).

Transmembrane regions (helical) follow at residues 19 to 39 (WLLLLLVVGSWLLARILAWTY) and 87 to 107 (GFTVWLGPIIPFIVLCHPDTI). Heme is bound at residue C468.

This sequence belongs to the cytochrome P450 family. Heme is required as a cofactor. Expressed in small intestine, liver, colon and heart.

It localises to the endoplasmic reticulum membrane. The protein localises to the microsome membrane. The enzyme catalyses an organic molecule + reduced [NADPH--hemoprotein reductase] + O2 = an alcohol + oxidized [NADPH--hemoprotein reductase] + H2O + H(+). It catalyses the reaction (5Z,8Z,11Z,14Z)-eicosatetraenoate + reduced [NADPH--hemoprotein reductase] + O2 = 18-hydroxy-(5Z,8Z,11Z,14Z)-eicosatetraenoate + oxidized [NADPH--hemoprotein reductase] + H2O + H(+). The catalysed reaction is (7Z,10Z,13Z,16Z,19Z)-docosapentaenoate + reduced [NADPH--hemoprotein reductase] + O2 = 10,11-epoxy-(7Z,13Z,16Z,19Z)-docosatetraenoate + oxidized [NADPH--hemoprotein reductase] + H2O + H(+). It carries out the reaction (7Z,10Z,13Z,16Z,19Z)-docosapentaenoate + reduced [NADPH--hemoprotein reductase] + O2 = 13,14-epoxy-(7Z,10Z,16Z,19Z)-docosatetraenoate + oxidized [NADPH--hemoprotein reductase] + H2O + H(+). The enzyme catalyses (7Z,10Z,13Z,16Z,19Z)-docosapentaenoate + reduced [NADPH--hemoprotein reductase] + O2 = 16,17-epoxy-(7Z,10Z,13Z,19Z)-docosatetraenoate + oxidized [NADPH--hemoprotein reductase] + H2O + H(+). It catalyses the reaction (7Z,10Z,13Z,16Z,19Z)-docosapentaenoate + reduced [NADPH--hemoprotein reductase] + O2 = 19,20-epoxy-(7Z,10Z,13Z,16Z)-docosatetraenoate + oxidized [NADPH--hemoprotein reductase] + H2O + H(+). The catalysed reaction is (4Z,7Z,10Z,13Z,16Z,19Z)-docosahexaenoate + reduced [NADPH--hemoprotein reductase] + O2 = 10,11-epoxy-(4Z,7Z,13Z,16Z,19Z)-docosapentaenoate + oxidized [NADPH--hemoprotein reductase] + H2O + H(+). It carries out the reaction (4Z,7Z,10Z,13Z,16Z,19Z)-docosahexaenoate + reduced [NADPH--hemoprotein reductase] + O2 = 13,14-epoxy-(4Z,7Z,10Z,16Z,19Z)-docosapentaenoate + oxidized [NADPH--hemoprotein reductase] + H2O + H(+). The enzyme catalyses (4Z,7Z,10Z,13Z,16Z,19Z)-docosahexaenoate + reduced [NADPH--hemoprotein reductase] + O2 = 16,17-epoxy-(4Z,7Z,10Z,13Z,19Z)-docosapentaenoate + oxidized [NADPH--hemoprotein reductase] + H2O + H(+). It catalyses the reaction (4Z,7Z,10Z,13Z,16Z,19Z)-docosahexaenoate + reduced [NADPH--hemoprotein reductase] + O2 = 19,20-epoxy-(4Z,7Z,10Z,13Z,16Z)-docosapentaenoate + oxidized [NADPH--hemoprotein reductase] + H2O + H(+). Its pathway is lipid metabolism; arachidonate metabolism. Its function is as follows. A cytochrome P450 monooxygenase involved in the metabolism of endogenous polyunsaturated fatty acids (PUFAs). Mechanistically, uses molecular oxygen inserting one oxygen atom into a substrate, and reducing the second into a water molecule, with two electrons provided by NADPH via cytochrome P450 reductase (CPR; NADPH-ferrihemoprotein reductase). Catalyzes the hydroxylation of carbon hydrogen bonds, with preference for omega-2 position. Metabolizes (5Z,8Z,11Z,14Z)-eicosatetraenoic acid (arachidonate) toward 18-hydroxy arachidonate. Catalyzes the epoxidation of double bonds of PUFAs such as docosapentaenoic and docosahexaenoic acids. Has low omega-hydroxylase activity toward leukotriene B4 and arachidonate. Involved in the metabolism of xenobiotics. Catalyzes the hydroxylation of the antihistamine drug ebastine. In Homo sapiens (Human), this protein is Cytochrome P450 4F12.